Here is a 144-residue protein sequence, read N- to C-terminus: Kunitz-type elastase inhibitor BrEI (144 aa).

A glycan (N-linked (GlcNAc...) asparagine) is linked at Asn38. A disulfide bridge links Cys41 with Cys88.

The protein belongs to the leguminous Kunitz-type inhibitor family.

Functionally, inhibitor of porcine pancreatic elastase with a Ki of 27 nM. Does not inhibit human neutrophil elastase, bovine trypsin, human plasma kallikrein or porcine pancreatic kallikrein. In Bauhinia rufa (Orchid tree), this protein is Kunitz-type elastase inhibitor BrEI.